The primary structure comprises 356 residues: 3-dehydroquinate synthase (356 aa).

Residues 106–110, 130–131, K143, and K152 contribute to the NAD(+) site; these read GVVGD and TT. Residues E185, H248, and H265 each coordinate Zn(2+).

This sequence belongs to the sugar phosphate cyclases superfamily. Dehydroquinate synthase family. Co(2+) is required as a cofactor. It depends on Zn(2+) as a cofactor. Requires NAD(+) as cofactor.

Its subcellular location is the cytoplasm. The enzyme catalyses 7-phospho-2-dehydro-3-deoxy-D-arabino-heptonate = 3-dehydroquinate + phosphate. It participates in metabolic intermediate biosynthesis; chorismate biosynthesis; chorismate from D-erythrose 4-phosphate and phosphoenolpyruvate: step 2/7. Functionally, catalyzes the conversion of 3-deoxy-D-arabino-heptulosonate 7-phosphate (DAHP) to dehydroquinate (DHQ). The chain is 3-dehydroquinate synthase from Thermoanaerobacter pseudethanolicus (strain ATCC 33223 / 39E) (Clostridium thermohydrosulfuricum).